The chain runs to 778 residues: Tubulin polyglutamylase ttll6 (778 aa).

Positions 1-43 (MGTPAERSVSEVCRCEPDPGLEGEGWGSDTHAEPSNTPIPLPV) are disordered. Residues 51–393 (KKKLWINLTN…LGACDRRKIT (343 aa)) enclose the TTL domain. ATP is bound by residues K168, 174-175 (QG), 196-199 (QVYM), and 209-211 (KFD). A protein is bound at residue Q174. R235 contacts L-glutamate. Residue 257 to 258 (TN) participates in ATP binding. L-glutamate contacts are provided by Y259 and K277. The Mg(2+) site is built by D340, E353, and N355. H356 lines the a protein pocket. Positions 365–445 (RLDREVKDSL…MGGFRRIFPR (81 aa)) are c-MTBD region. Residue K371 coordinates L-glutamate. Basic and acidic residues-rich tracts occupy residues 402-418 (ERLQ…EEPR), 485-510 (KQEQ…GEKV), 533-542 (SVREETPVSL), and 760-778 (LSHD…EHSL). 3 disordered regions span residues 402–422 (ERLQ…QSQA), 485–542 (KQEQ…PVSL), and 758–778 (PHLS…EHSL).

The protein belongs to the tubulin--tyrosine ligase family. Mg(2+) serves as cofactor.

Its subcellular location is the cytoplasm. It is found in the cytoskeleton. It localises to the cilium axoneme. The protein resides in the cilium basal body. The enzyme catalyses L-glutamyl-[protein] + L-glutamate + ATP = gamma-L-glutamyl-L-glutamyl-[protein] + ADP + phosphate + H(+). The catalysed reaction is (L-glutamyl)(n)-gamma-L-glutamyl-L-glutamyl-[protein] + L-glutamate + ATP = (L-glutamyl)(n+1)-gamma-L-glutamyl-L-glutamyl-[protein] + ADP + phosphate + H(+). Polyglutamylase which modifies both tubulin and non-tubulin proteins, generating alpha-linked polyglutamate side chains on the gamma-carboxyl group of specific glutamate residues of target proteins. Preferentially mediates ATP-dependent long polyglutamate chain elongation over the initiation step of the polyglutamylation reaction. Preferentially modifies the alpha-tubulin tail over a beta-tail. Mediates microtubule polyglutamylation in cilia axoneme, which is important for ciliary structural formation and motility. Polyglutamylates olfactory cilia, necessary for the regulation of ciliary structure and beating. The polypeptide is Tubulin polyglutamylase ttll6 (Danio rerio (Zebrafish)).